We begin with the raw amino-acid sequence, 451 residues long: Phosphoglucosamine mutase (451 aa).

The active-site Phosphoserine intermediate is the Ser-102. 4 residues coordinate Mg(2+): Ser-102, Asp-242, Asp-244, and Asp-246. At Ser-102 the chain carries Phosphoserine.

Belongs to the phosphohexose mutase family. Mg(2+) is required as a cofactor. In terms of processing, activated by phosphorylation.

The catalysed reaction is alpha-D-glucosamine 1-phosphate = D-glucosamine 6-phosphate. Its function is as follows. Catalyzes the conversion of glucosamine-6-phosphate to glucosamine-1-phosphate. This Staphylococcus aureus (strain bovine RF122 / ET3-1) protein is Phosphoglucosamine mutase.